The chain runs to 861 residues: DNA topoisomerase 1 (861 aa).

The Toprim domain occupies 3-141; the sequence is KSLVIVESPA…KFSRVVFNEI (139 aa). Mg(2+) contacts are provided by Glu9 and Asp110. The region spanning 157-572 is the Topo IA-type catalytic domain; sequence NMNRVHAQQA…DFFKKFSEQL (416 aa). The interval 191–196 is interaction with DNA; it reads SAGRVQ. Tyr318 (O-(5'-phospho-DNA)-tyrosine intermediate) is an active-site residue. 3 C4-type zinc fingers span residues 596 to 628, 658 to 685, and 707 to 732; these read CPIC…KKRC, CDIC…NPSC, and CEKC…NKIC.

The protein belongs to the type IA topoisomerase family. Monomer. Mg(2+) serves as cofactor.

It catalyses the reaction ATP-independent breakage of single-stranded DNA, followed by passage and rejoining.. Its function is as follows. Releases the supercoiling and torsional tension of DNA, which is introduced during the DNA replication and transcription, by transiently cleaving and rejoining one strand of the DNA duplex. Introduces a single-strand break via transesterification at a target site in duplex DNA. The scissile phosphodiester is attacked by the catalytic tyrosine of the enzyme, resulting in the formation of a DNA-(5'-phosphotyrosyl)-enzyme intermediate and the expulsion of a 3'-OH DNA strand. The free DNA strand then undergoes passage around the unbroken strand, thus removing DNA supercoils. Finally, in the religation step, the DNA 3'-OH attacks the covalent intermediate to expel the active-site tyrosine and restore the DNA phosphodiester backbone. This chain is DNA topoisomerase 1, found in Buchnera aphidicola subsp. Acyrthosiphon pisum (strain APS) (Acyrthosiphon pisum symbiotic bacterium).